The sequence spans 405 residues: Phosphoglycerate kinase (405 aa).

Substrate is bound by residues 21–23, Arg36, 59–62, Arg119, and Arg161; these read DFN and HLGR. ATP is bound by residues Lys212, Gly301, Glu332, and 361–364; that span reads GGDS.

It belongs to the phosphoglycerate kinase family. As to quaternary structure, monomer.

The protein localises to the cytoplasm. It catalyses the reaction (2R)-3-phosphoglycerate + ATP = (2R)-3-phospho-glyceroyl phosphate + ADP. It participates in carbohydrate degradation; glycolysis; pyruvate from D-glyceraldehyde 3-phosphate: step 2/5. This Leuconostoc mesenteroides subsp. mesenteroides (strain ATCC 8293 / DSM 20343 / BCRC 11652 / CCM 1803 / JCM 6124 / NCDO 523 / NBRC 100496 / NCIMB 8023 / NCTC 12954 / NRRL B-1118 / 37Y) protein is Phosphoglycerate kinase.